Reading from the N-terminus, the 228-residue chain is Ankyrin repeat domain-containing protein 46 (228 aa).

4 ANK repeats span residues 11–40 (QTNV…DPNI), 44–73 (RGRT…DLLA), 77–103 (QGNT…KIDI), and 107–138 (QGAT…EVKG). A helical membrane pass occupies residues 195-215 (VLLLIFVIALLSLGIAYYVSG).

The protein resides in the membrane. In Bos taurus (Bovine), this protein is Ankyrin repeat domain-containing protein 46 (ANKRD46).